Reading from the N-terminus, the 883-residue chain is Valine--tRNA ligase (883 aa).

Positions 46 to 56 (PNVTGKLHLGH) match the 'HIGH' region motif. A 'KMSKS' region motif is present at residues 520-524 (KMSKS). Lysine 523 provides a ligand contact to ATP. Positions 809–844 (LADLLNVEEELARLEKELAKWQKELDMVGKKLSNER) form a coiled coil.

Belongs to the class-I aminoacyl-tRNA synthetase family. ValS type 1 subfamily. Monomer.

It localises to the cytoplasm. The catalysed reaction is tRNA(Val) + L-valine + ATP = L-valyl-tRNA(Val) + AMP + diphosphate. Catalyzes the attachment of valine to tRNA(Val). As ValRS can inadvertently accommodate and process structurally similar amino acids such as threonine, to avoid such errors, it has a 'posttransfer' editing activity that hydrolyzes mischarged Thr-tRNA(Val) in a tRNA-dependent manner. This chain is Valine--tRNA ligase, found in Streptococcus thermophilus (strain CNRZ 1066).